The sequence spans 447 residues: Transcriptional enhancer factor TEF-4 (447 aa).

Disordered regions lie at residues Met-1–Ser-46 and Thr-183–Trp-218. The segment covering Asp-11–Glu-20 has biased composition (low complexity). Positions Glu-25–Asp-40 are enriched in gly residues. A DNA-binding region (TEA) is located at residues Gly-38–Glu-114. The segment at Trp-172–Asp-447 is transcriptional activation. The segment covering Thr-183–Ser-206 has biased composition (low complexity). Positions Pro-207–Pro-216 are enriched in pro residues.

In terms of assembly, interacts with YAP1 and WWTR1/TAZ.

The protein localises to the nucleus. Functionally, transcription factor which plays a key role in the Hippo signaling pathway, a pathway involved in organ size control and tumor suppression by restricting proliferation and promoting apoptosis. The core of this pathway is composed of a kinase cascade wherein MST1/MST2, in complex with its regulatory protein SAV1, phosphorylates and activates LATS1/2 in complex with its regulatory protein MOB1, which in turn phosphorylates and inactivates YAP1 oncoprotein and WWTR1/TAZ. Acts by mediating gene expression of YAP1 and WWTR1/TAZ, thereby regulating cell proliferation, migration and epithelial mesenchymal transition (EMT) induction. Binds to the SPH and GT-IIC 'enhansons' (5'-GTGGAATGT-3'). May be involved in the gene regulation of neural development. Binds to the M-CAT motif. The polypeptide is Transcriptional enhancer factor TEF-4 (TEAD2) (Homo sapiens (Human)).